A 115-amino-acid chain; its full sequence is NAD(P)H-quinone oxidoreductase subunit M (115 aa).

This sequence belongs to the complex I NdhM subunit family. As to quaternary structure, NDH-1 can be composed of about 15 different subunits; different subcomplexes with different compositions have been identified which probably have different functions.

Its subcellular location is the cellular thylakoid membrane. The catalysed reaction is a plastoquinone + NADH + (n+1) H(+)(in) = a plastoquinol + NAD(+) + n H(+)(out). It catalyses the reaction a plastoquinone + NADPH + (n+1) H(+)(in) = a plastoquinol + NADP(+) + n H(+)(out). Functionally, NDH-1 shuttles electrons from an unknown electron donor, via FMN and iron-sulfur (Fe-S) centers, to quinones in the respiratory and/or the photosynthetic chain. The immediate electron acceptor for the enzyme in this species is believed to be plastoquinone. Couples the redox reaction to proton translocation, and thus conserves the redox energy in a proton gradient. Cyanobacterial NDH-1 also plays a role in inorganic carbon-concentration. The protein is NAD(P)H-quinone oxidoreductase subunit M of Prochlorococcus marinus (strain MIT 9303).